The chain runs to 207 residues: MAEYTLPDLDWDYAALEPHISGQINEIHHTKHHATYVKGVNDALAKLEEARANEDHAAIFLNEKNLAFHLGGHVNHSIWWKNLSPDGGDKPTGELAAAIDDAFGSFDKFRAQFSAAANGLQGSGWAVLGYDTVGSRLLTFQLYDQQANVPLGIIPLLQVDMWEHAFYLQYKNVKADYVKAFWNVVNWADVQKRYAAATSKAQGLIFG.

4 residues coordinate Mn(2+): His-28, His-76, Asp-160, and His-164.

This sequence belongs to the iron/manganese superoxide dismutase family. Mn(2+) is required as a cofactor.

The protein localises to the secreted. The catalysed reaction is 2 superoxide + 2 H(+) = H2O2 + O2. Functionally, destroys superoxide anion radicals which are normally produced within the cells and which are toxic to biological systems. In Mycolicibacterium paratuberculosis (strain ATCC BAA-968 / K-10) (Mycobacterium paratuberculosis), this protein is Superoxide dismutase [Mn] (sodA).